A 493-amino-acid chain; its full sequence is Cholesteryl ester transfer protein (493 aa).

An N-terminal signal peptide occupies residues 1–17 (MLAATVLTLALLGNAHA). N105 carries an N-linked (GlcNAc...) (complex) asparagine glycan. Residues C160 and C201 are joined by a disulfide bond. N-linked (GlcNAc...) asparagine glycans are attached at residues N257, N358, and N413.

Belongs to the BPI/LBP/Plunc superfamily. BPI/LBP family. Expressed by the liver and secreted in plasma.

The protein localises to the secreted. It carries out the reaction cholesteryl (9Z-octadecenoate)(in) = cholesteryl (9Z-octadecenoate)(out). The catalysed reaction is 1,2,3-tri-(9Z-octadecenoyl)-glycerol(in) = 1,2,3-tri-(9Z-octadecenoyl)-glycerol(out). It catalyses the reaction cholesteryl (9Z,12Z)-octadecadienoate(in) = cholesteryl (9Z,12Z)-octadecadienoate(out). In terms of biological role, involved in the transfer of neutral lipids, including cholesteryl ester and triglyceride, among lipoprotein particles. Allows the net movement of cholesteryl ester from high density lipoproteins/HDL to triglyceride-rich very low density lipoproteins/VLDL, and the equimolar transport of triglyceride from VLDL to HDL. Regulates the reverse cholesterol transport, by which excess cholesterol is removed from peripheral tissues and returned to the liver for elimination. This chain is Cholesteryl ester transfer protein, found in Homo sapiens (Human).